Consider the following 84-residue polypeptide: Anaphase-promoting complex subunit 11 (84 aa).

Zn(2+) is bound by residues Cys23, Cys26, Cys34, Cys37, Cys44, Cys51, His53, His56, His58, Cys59, Cys73, and Cys76. Residues 34–77 form an RING-type zinc finger; that stretch reads CPDCKVPGDDCPLVWGQCSHCFHMHCILKWLHAQQVQQHCPMCR.

This sequence belongs to the RING-box family. As to quaternary structure, the mammalian APC/C is composed at least of 14 distinct subunits ANAPC1, ANAPC2, CDC27/APC3, ANAPC4, ANAPC5, CDC16/APC6, ANAPC7, CDC23/APC8, ANAPC10, ANAPC11, CDC26/APC12, ANAPC13, ANAPC15 and ANAPC16 that assemble into a complex of at least 19 chains with a combined molecular mass of around 1.2 MDa; APC/C interacts with FZR1 and FBXO5. Interacts with the cullin domain of ANAPC2. Interacts with UBE2D2. Post-translationally, auto-ubiquitinated. Expressed at high levels in skeletal muscle and heart; in moderate levels in brain, kidney, and liver; and at low levels in colon, thymus, spleen, small intestine, placenta, lung and peripheral blood leukocyte.

The protein localises to the cytoplasm. It localises to the nucleus. It participates in protein modification; protein ubiquitination. Functionally, together with the cullin protein ANAPC2, constitutes the catalytic component of the anaphase promoting complex/cyclosome (APC/C), a cell cycle-regulated E3 ubiquitin ligase that controls progression through mitosis and the G1 phase of the cell cycle. The APC/C complex acts by mediating ubiquitination and subsequent degradation of target proteins: it mainly mediates the formation of 'Lys-11'-linked polyubiquitin chains and, to a lower extent, the formation of 'Lys-48'- and 'Lys-63'-linked polyubiquitin chains. The APC/C complex catalyzes assembly of branched 'Lys-11'-/'Lys-48'-linked branched ubiquitin chains on target proteins. May recruit the E2 ubiquitin-conjugating enzymes to the complex. This Homo sapiens (Human) protein is Anaphase-promoting complex subunit 11 (ANAPC11).